A 328-amino-acid chain; its full sequence is Interleukin-12 subunit beta (328 aa).

The signal sequence occupies residues 1–22 (MCHQQLVISWFSLVFLASPLMA). The 78-residue stretch at 29–106 (DVYVVELDWY…LSHSLLLLHK (78 aa)) folds into the Ig-like C2-type domain. A disulfide bridge links cysteine 50 with cysteine 90. N-linked (GlcNAc...) asparagine glycans are attached at residues asparagine 125, asparagine 135, and asparagine 222. The Fibronectin type-III domain maps to 237–328 (PPKNLQLKPL…WSEWASVPCS (92 aa)).

Belongs to the IL-12B family. Heterodimer with IL12A; disulfide-linked. The heterodimer is known as interleukin IL-12. Heterodimer with IL23A; disulfide-linked. The heterodimer is known as interleukin IL-23. Also secreted as a monomer. Interacts with NBR1; this interaction promotes IL-12 secretion.

The protein localises to the secreted. In terms of biological role, cytokine that can act as a growth factor for activated T and NK cells, enhance the lytic activity of NK/lymphokine-activated killer cells, and stimulate the production of IFN-gamma by resting PBMC. Its function is as follows. Associates with IL23A to form the IL-23 interleukin, a heterodimeric cytokine which functions in innate and adaptive immunity. IL-23 may constitute with IL-17 an acute response to infection in peripheral tissues. IL-23 binds to a heterodimeric receptor complex composed of IL12RB1 and IL23R, activates the Jak-Stat signaling cascade, stimulates memory rather than naive T-cells and promotes production of pro-inflammatory cytokines. IL-23 induces autoimmune inflammation and thus may be responsible for autoimmune inflammatory diseases and may be important for tumorigenesis. This is Interleukin-12 subunit beta (IL12B) from Macaca mulatta (Rhesus macaque).